Consider the following 286-residue polypeptide: Translocon-associated protein subunit alpha (286 aa).

An N-terminal signal peptide occupies residues 1 to 20 (MSSLRRLLLLLLLVFPATLL). Residues 21-207 (LRVGPGGSLA…EREDGLDGET (187 aa)) lie on the Lumenal side of the membrane. Residues 37 to 75 (EDEETVEDSIIEDEDDEAEVEEDEPTDLAEDKEEDDVSG) show a composition bias toward acidic residues. The interval 37–83 (EDEETVEDSIIEDEDDEAEVEEDEPTDLAEDKEEDDVSGEPEASPSA) is disordered. N-linked (GlcNAc...) asparagine glycosylation is found at N136 and N191. Residues 208-228 (IFMYMFLAGLGLLVVVGLHQL) traverse the membrane as a helical segment. The Cytoplasmic segment spans residues 229-286 (LESRKRKRPIQKVEMGTSSQNDVDMSWIPQETLNQINKASPRRLPRKRAQKRSVGSDE). S247 carries the phosphoserine modification. T260 is subject to Phosphothreonine. Positions 261–286 (LNQINKASPRRLPRKRAQKRSVGSDE) are disordered. S268 is modified (phosphoserine). Basic residues predominate over residues 268 to 279 (SPRRLPRKRAQK).

It belongs to the TRAP-alpha family. In terms of assembly, heterotetramer of TRAP-alpha, TRAP-beta, TRAP-delta and TRAP-gamma. Interacts with palmitoylated calnexin (CALX), the interaction is required for efficient folding of glycosylated proteins. In terms of processing, phosphorylated in its cytoplasmic tail.

It localises to the endoplasmic reticulum membrane. Its function is as follows. TRAP proteins are part of a complex whose function is to bind calcium to the ER membrane and thereby regulate the retention of ER resident proteins. May be involved in the recycling of the translocation apparatus after completion of the translocation process or may function as a membrane-bound chaperone facilitating folding of translocated proteins. This is Translocon-associated protein subunit alpha (SSR1) from Bos taurus (Bovine).